The chain runs to 649 residues: Mediator of RNA polymerase II transcription subunit 17 (649 aa).

Positions 51–79 are disordered; the sequence is QGSGSEEEEAAGPDGDAPDWGGAGADQDD.

The protein belongs to the Mediator complex subunit 17 family. As to quaternary structure, component of the Mediator complex, which is composed of MED1, MED4, MED6, MED7, MED8, MED9, MED10, MED11, MED12, MED13, MED13L, MED14, MED15, MED16, MED17, MED18, MED19, MED20, MED21, MED22, MED23, MED24, MED25, MED26, MED27, MED29, MED30, MED31, CCNC, CDK8 and CDC2L6/CDK11. The MED12, MED13, CCNC and CDK8 subunits form a distinct module termed the CDK8 module. Mediator containing the CDK8 module is less active than Mediator lacking this module in supporting transcriptional activation. Individual preparations of the Mediator complex lacking one or more distinct subunits have been variously termed ARC, CRSP, DRIP, PC2, SMCC and TRAP. Interacts with STAT2. Interacts with GATA1 and PPARG.

It is found in the nucleus. Component of the Mediator complex, a coactivator involved in the regulated transcription of nearly all RNA polymerase II-dependent genes. Mediator functions as a bridge to convey information from gene-specific regulatory proteins to the basal RNA polymerase II transcription machinery. Mediator is recruited to promoters by direct interactions with regulatory proteins and serves as a scaffold for the assembly of a functional preinitiation complex with RNA polymerase II and the general transcription factors. The protein is Mediator of RNA polymerase II transcription subunit 17 (Med17) of Mus musculus (Mouse).